The following is an 806-amino-acid chain: Acetyl-CoA decarbonylase/synthase complex subunit alpha 1 (806 aa).

Positions 73, 76, 77, 79, 84, and 94 each coordinate [4Fe-4S] cluster. H117 is a binding site for CO. [Ni-4Fe-4S] cluster-binding residues include H250, C278, and C323. 4Fe-4S ferredoxin-type domains follow at residues 406–436 (SDEQ…IPEA) and 445–475 (FSYL…LSVI). 8 residues coordinate [4Fe-4S] cluster: C417, C420, C423, C427, C455, C458, C461, and C465. [Ni-4Fe-4S] cluster contacts are provided by C523, C552, and C587.

The protein belongs to the Ni-containing carbon monoxide dehydrogenase family. As to quaternary structure, heterotetramer of two alpha and two epsilon subunits. The ACDS complex is made up of alpha, epsilon, beta, gamma and delta subunits with a probable stoichiometry of (alpha(2)epsilon(2))(4)-beta(8)-(gamma(1)delta(1))(8). The cofactor is [4Fe-4S] cluster. [Ni-4Fe-4S] cluster is required as a cofactor.

It catalyses the reaction CO + 2 oxidized [2Fe-2S]-[ferredoxin] + H2O = 2 reduced [2Fe-2S]-[ferredoxin] + CO2 + 2 H(+). The protein operates within one-carbon metabolism; methanogenesis from acetate. Part of the ACDS complex that catalyzes the reversible cleavage of acetyl-CoA, allowing growth on acetate as sole source of carbon and energy. The alpha-epsilon subcomponent functions as a carbon monoxide dehydrogenase. The sequence is that of Acetyl-CoA decarbonylase/synthase complex subunit alpha 1 from Methanosarcina mazei (strain ATCC BAA-159 / DSM 3647 / Goe1 / Go1 / JCM 11833 / OCM 88) (Methanosarcina frisia).